Reading from the N-terminus, the 897-residue chain is Protein translocase subunit SecA (897 aa).

ATP contacts are provided by residues Q89, 107-111, and D517; that span reads GEGKT. Residues 839-856 show a composition bias toward polar residues; the sequence is DDAQATHSNPNEQTKQAS. Positions 839 to 897 are disordered; sequence DDAQATHSNPNEQTKQASITNNIQTQTDQQNTYQRKEKKVGRNEPCPCGSGKKYKKCHG. The segment covering 857–870 has biased composition (low complexity); it reads ITNNIQTQTDQQNT. C884, C886, C895, and H896 together coordinate Zn(2+).

It belongs to the SecA family. Monomer and homodimer. Part of the essential Sec protein translocation apparatus which comprises SecA, SecYEG and auxiliary proteins SecDF-YajC and YidC. Zn(2+) serves as cofactor.

The protein resides in the cell inner membrane. It is found in the cytoplasm. The catalysed reaction is ATP + H2O + cellular proteinSide 1 = ADP + phosphate + cellular proteinSide 2.. Part of the Sec protein translocase complex. Interacts with the SecYEG preprotein conducting channel. Has a central role in coupling the hydrolysis of ATP to the transfer of proteins into and across the cell membrane, serving as an ATP-driven molecular motor driving the stepwise translocation of polypeptide chains across the membrane. This is Protein translocase subunit SecA from Vesicomyosocius okutanii subsp. Calyptogena okutanii (strain HA).